An 877-amino-acid chain; its full sequence is Leucine--tRNA ligase (877 aa).

The 'HIGH' region motif lies at 43–53; it reads PYPSGRIHMGH. The short motif at 628-632 is the 'KMSKS' region element; sequence KMSKS. An ATP-binding site is contributed by K631.

Belongs to the class-I aminoacyl-tRNA synthetase family.

The protein resides in the cytoplasm. The catalysed reaction is tRNA(Leu) + L-leucine + ATP = L-leucyl-tRNA(Leu) + AMP + diphosphate. This Brucella melitensis biotype 2 (strain ATCC 23457) protein is Leucine--tRNA ligase.